The sequence spans 468 residues: Serine--tRNA ligase (468 aa).

272-274 (TAE) is an L-serine binding site. 303–305 (RAE) contributes to the ATP binding site. Glutamate 326 is a binding site for L-serine. 390-393 (EISS) contributes to the ATP binding site. Position 426 (serine 426) interacts with L-serine.

It belongs to the class-II aminoacyl-tRNA synthetase family. Type-1 seryl-tRNA synthetase subfamily. Homodimer. The tRNA molecule binds across the dimer.

It localises to the cytoplasm. It carries out the reaction tRNA(Ser) + L-serine + ATP = L-seryl-tRNA(Ser) + AMP + diphosphate + H(+). It catalyses the reaction tRNA(Sec) + L-serine + ATP = L-seryl-tRNA(Sec) + AMP + diphosphate + H(+). Its pathway is aminoacyl-tRNA biosynthesis; selenocysteinyl-tRNA(Sec) biosynthesis; L-seryl-tRNA(Sec) from L-serine and tRNA(Sec): step 1/1. Catalyzes the attachment of serine to tRNA(Ser). Is also able to aminoacylate tRNA(Sec) with serine, to form the misacylated tRNA L-seryl-tRNA(Sec), which will be further converted into selenocysteinyl-tRNA(Sec). The polypeptide is Serine--tRNA ligase (Xanthobacter autotrophicus (strain ATCC BAA-1158 / Py2)).